An 880-amino-acid polypeptide reads, in one-letter code: Guanine nucleotide-binding protein subunit beta 2 (880 aa).

Position 24 is a phosphoserine (S24). Kelch repeat units lie at residues 291–339 (NIYI…MVNN), 377–425 (HIFF…KIDI), and 501–552 (TVII…LTPS). The tract at residues 624 to 649 (FNSGSAAQESPKAGASASSASAASFD) is disordered. Over residues 638-647 (ASASSASAAS) the composition is skewed to low complexity. The Kelch 4 repeat unit spans residues 691–738 (TVVLHGGSNGLNVLDDMWLMDLECETWTPIETFAKADSSEDGDEKLDS).

As to quaternary structure, g proteins are composed of 3 units, alpha, beta and gamma. GPB1 interacts with the alpha subunit GPA2.

The protein localises to the cytoplasm. The protein resides in the mitochondrion. Its function is as follows. Beta subunit of a guanine nucleotide-binding protein (G protein). G proteins are involved as modulators or transducers in various transmembrane signaling systems. The beta and gamma chains are required for the GTPase activity, for replacement of GDP by GTP, and for G protein-effector interaction. Involved in the determination of the cAMP level according to nutritional conditions, most probably as a regulator of cAMP phosphodiesterase. Required for the control of pseudohyphal and haploid invasive growth. This chain is Guanine nucleotide-binding protein subunit beta 2 (GPB2), found in Saccharomyces cerevisiae (strain ATCC 204508 / S288c) (Baker's yeast).